Reading from the N-terminus, the 444-residue chain is MLQCAPKKNERLRGSCDFCTQSKLRCNKNKPSCRRCTLQQQPCVYSVARRTGRPPKHPRKANDCQEANGQHGDQDPVTSTPGGSYQQQSNHLLDVEGDGANFTLADASTTAQGRETAASPALDNALLVGETFGFSSLLDDPLIQSDDFFSFSLCMPPGEKEGHMASPRTLNGSTGPCSPTVLSSIDVPHLPARFGFLESSVESGLHGRTRPHLVEQPDKTVPSSFSEIEKIYDEGLTFSGLDSAINAVTNNGKGEPNISGTMAAHPHSKRQCFCSTSMSKLQMLVLHPTLCQKNSRARFDMALFLEEVVFSIYRDVLQCLVCQSKSLHSLASLCICTDWVIEALRDVAQDLSSGQDNLGGFRAGLYPPKDKFSICVGRFVLDDQLRESCTRSLVRYRLRKLIPIMDTMMKLNHRGAGGALSQAIRTMVEDVHHKIESALGMMEL.

Positions 16–43 (CDFCTQSKLRCNKNKPSCRRCTLQQQPC) form a DNA-binding region, zn(2)-C6 fungal-type. Residues 49–88 (RRTGRPPKHPRKANDCQEANGQHGDQDPVTSTPGGSYQQQ) are disordered. Residues 50 to 59 (RTGRPPKHPR) are compositionally biased toward basic residues. The span at 76 to 88 (PVTSTPGGSYQQQ) shows a compositional bias: polar residues.

It is found in the nucleus. Transcription factor that regulates the expression of the gene clusters that mediate the biosynthesis of the host-selective toxins (HSTs) AF-toxins responsible for Alternaria black spot of strawberry disease by the strawberry pathotype. On cellular level, AF-toxins affect plasma membrane of susceptible cells and cause a sudden increase in loss of K(+) after a few minutes of toxin treatment. The protein is Transcription activator AFTR-2 of Alternaria alternata (Alternaria rot fungus).